A 228-amino-acid chain; its full sequence is UPF0056 membrane protein MJ0972 (228 aa).

Helical transmembrane passes span F22–I42, V68–I88, V133–I153, G163–T183, and I201–L221.

Belongs to the UPF0056 (MarC) family.

Its subcellular location is the cell membrane. The polypeptide is UPF0056 membrane protein MJ0972 (Methanocaldococcus jannaschii (strain ATCC 43067 / DSM 2661 / JAL-1 / JCM 10045 / NBRC 100440) (Methanococcus jannaschii)).